The primary structure comprises 100 residues: Cell division protein FtsB (100 aa).

At 1 to 3 (MKW) the chain is on the cytoplasmic side. A helical membrane pass occupies residues 4 to 21 (LAIILVVALLALQYRLWM). The Periplasmic segment spans residues 22–100 (GEGSIASVVS…TDKDTKKNKK (79 aa)). The stretch at 26-73 (IASVVSLNREIAKQKEENARLRERNRLLAAEVDALKQGKDAIEERARN) forms a coiled coil.

The protein belongs to the FtsB family. As to quaternary structure, part of a complex composed of FtsB, FtsL and FtsQ.

It is found in the cell inner membrane. In terms of biological role, essential cell division protein. May link together the upstream cell division proteins, which are predominantly cytoplasmic, with the downstream cell division proteins, which are predominantly periplasmic. This chain is Cell division protein FtsB, found in Saccharophagus degradans (strain 2-40 / ATCC 43961 / DSM 17024).